The sequence spans 173 residues: Photosystem I assembly protein Ycf3 (173 aa).

TPR repeat units follow at residues 35-68 (AYVY…ETDP), 72-105 (GETL…NPKQ), and 120-153 (GRIA…NPGG).

The protein belongs to the Ycf3 family.

It localises to the cellular thylakoid membrane. Essential for the assembly of the photosystem I (PSI) complex. May act as a chaperone-like factor to guide the assembly of the PSI subunits. This Synechococcus sp. (strain CC9902) protein is Photosystem I assembly protein Ycf3.